Here is a 182-residue protein sequence, read N- to C-terminus: Thioredoxin F-type, chloroplastic (182 aa).

The N-terminal 69 residues, 1–69 (MALNLCTSPK…SVRSSLETAG (69 aa)), are a transit peptide targeting the chloroplast. The Thioredoxin domain occupies 70–181 (PTVTVGKVTE…LVAAIDTVRS (112 aa)). Active-site nucleophile residues include C106 and C109. C106 and C109 are joined by a disulfide.

It belongs to the thioredoxin family. Plant F-type subfamily. In terms of assembly, forms a complex with heterodimeric ferredoxin-thioredoxin reductase (FTR) and ferredoxin.

Its subcellular location is the plastid. It is found in the chloroplast. Participates in various redox reactions through the reversible oxidation of the active center dithiol to a disulfide. The F form is known to activate a number of enzymes of the photosynthetic carbon cycle. In Pisum sativum (Garden pea), this protein is Thioredoxin F-type, chloroplastic.